The following is a 386-amino-acid chain: Succinate--CoA ligase [ADP-forming] subunit beta (386 aa).

ATP-binding residues include Lys46, Glu99, Ala102, and Glu107. Asn199 and Asp213 together coordinate Mg(2+). Residues Asn264 and 321-323 (GIM) each bind substrate.

This sequence belongs to the succinate/malate CoA ligase beta subunit family. Heterotetramer of two alpha and two beta subunits. The cofactor is Mg(2+).

The catalysed reaction is succinate + ATP + CoA = succinyl-CoA + ADP + phosphate. It carries out the reaction GTP + succinate + CoA = succinyl-CoA + GDP + phosphate. The protein operates within carbohydrate metabolism; tricarboxylic acid cycle; succinate from succinyl-CoA (ligase route): step 1/1. Its function is as follows. Succinyl-CoA synthetase functions in the citric acid cycle (TCA), coupling the hydrolysis of succinyl-CoA to the synthesis of either ATP or GTP and thus represents the only step of substrate-level phosphorylation in the TCA. The beta subunit provides nucleotide specificity of the enzyme and binds the substrate succinate, while the binding sites for coenzyme A and phosphate are found in the alpha subunit. This is Succinate--CoA ligase [ADP-forming] subunit beta from Orientia tsutsugamushi (strain Boryong) (Rickettsia tsutsugamushi).